The primary structure comprises 110 residues: Large ribosomal subunit protein uL22 (110 aa).

It belongs to the universal ribosomal protein uL22 family. Part of the 50S ribosomal subunit.

This protein binds specifically to 23S rRNA; its binding is stimulated by other ribosomal proteins, e.g. L4, L17, and L20. It is important during the early stages of 50S assembly. It makes multiple contacts with different domains of the 23S rRNA in the assembled 50S subunit and ribosome. Functionally, the globular domain of the protein is located near the polypeptide exit tunnel on the outside of the subunit, while an extended beta-hairpin is found that lines the wall of the exit tunnel in the center of the 70S ribosome. The sequence is that of Large ribosomal subunit protein uL22 from Pasteurella multocida (strain Pm70).